The chain runs to 278 residues: Large ribosomal subunit protein uL2 (278 aa).

Disordered stretches follow at residues 32–57 (ALTEGKNKTGGRNNKGHRTSRGIGGG) and 221–278 (RGVA…KKKR). Residues 269 to 278 (IRSRHAKKKR) are compositionally biased toward basic residues.

The protein belongs to the universal ribosomal protein uL2 family. As to quaternary structure, part of the 50S ribosomal subunit. Forms a bridge to the 30S subunit in the 70S ribosome.

One of the primary rRNA binding proteins. Required for association of the 30S and 50S subunits to form the 70S ribosome, for tRNA binding and peptide bond formation. It has been suggested to have peptidyltransferase activity; this is somewhat controversial. Makes several contacts with the 16S rRNA in the 70S ribosome. The polypeptide is Large ribosomal subunit protein uL2 (Zymomonas mobilis subsp. mobilis (strain ATCC 31821 / ZM4 / CP4)).